A 671-amino-acid polypeptide reads, in one-letter code: UvrABC system protein B (671 aa).

In terms of domain architecture, Helicase ATP-binding spans 25–412; the sequence is EGIDAGLAHQ…AGRVVEQVVR (388 aa). An ATP-binding site is contributed by 38-45; the sequence is GVTGSGKT. Positions 91–114 match the Beta-hairpin motif; that stretch reads YYDYYQPEAYVPSSDTFIEKDASI. The 167-residue stretch at 429–595 folds into the Helicase C-terminal domain; it reads QVDDLLSEIH…GVFKDVADIM (167 aa). The disordered stretch occupies residues 600–624; sequence VPGSRSKKRKGMAKAAEENARYENE. A compositionally biased stretch (basic and acidic residues) spans 614–624; it reads AAEENARYENE. Positions 632 to 667 constitute a UVR domain; it reads NKRIRQLEEKMYQLARDLEFEAAAQMRDEIGKLRER.

It belongs to the UvrB family. As to quaternary structure, forms a heterotetramer with UvrA during the search for lesions. Interacts with UvrC in an incision complex.

The protein resides in the cytoplasm. Functionally, the UvrABC repair system catalyzes the recognition and processing of DNA lesions. A damage recognition complex composed of 2 UvrA and 2 UvrB subunits scans DNA for abnormalities. Upon binding of the UvrA(2)B(2) complex to a putative damaged site, the DNA wraps around one UvrB monomer. DNA wrap is dependent on ATP binding by UvrB and probably causes local melting of the DNA helix, facilitating insertion of UvrB beta-hairpin between the DNA strands. Then UvrB probes one DNA strand for the presence of a lesion. If a lesion is found the UvrA subunits dissociate and the UvrB-DNA preincision complex is formed. This complex is subsequently bound by UvrC and the second UvrB is released. If no lesion is found, the DNA wraps around the other UvrB subunit that will check the other stand for damage. The sequence is that of UvrABC system protein B from Pseudomonas savastanoi pv. phaseolicola (strain 1448A / Race 6) (Pseudomonas syringae pv. phaseolicola (strain 1448A / Race 6)).